A 73-amino-acid chain; its full sequence is uncharacterized protein (73 aa).

The first 22 residues, 1–22, serve as a signal peptide directing secretion; it reads MKILGVTGFILICLLAISVLMD. A helical membrane pass occupies residues 44–66; it reads TFAEWVVLLFFVLVLVREMYVIY.

It is found in the membrane. This is an uncharacterized protein from Bacillus subtilis (strain 168).